Reading from the N-terminus, the 142-residue chain is Ribosome maturation factor RimP (142 aa).

It belongs to the RimP family.

It localises to the cytoplasm. Required for maturation of 30S ribosomal subunits. In Sulfurovum sp. (strain NBC37-1), this protein is Ribosome maturation factor RimP.